The sequence spans 100 residues: Nucleoid-associated protein HPSH_00175 (100 aa).

The protein belongs to the YbaB/EbfC family. As to quaternary structure, homodimer.

The protein resides in the cytoplasm. It localises to the nucleoid. Binds to DNA and alters its conformation. May be involved in regulation of gene expression, nucleoid organization and DNA protection. The protein is Nucleoid-associated protein HPSH_00175 of Helicobacter pylori (strain Shi470).